The following is a 359-amino-acid chain: Glucose 1-dehydrogenase (359 aa).

C39 is a binding site for Zn(2+). T41 contacts substrate. Positions 64 and 65 each coordinate Zn(2+). 2 residues coordinate substrate: E116 and E152. A Zn(2+)-binding site is contributed by E152. An NADP(+)-binding site is contributed by 183–186 (AGPI).

This sequence belongs to the zinc-containing alcohol dehydrogenase family. Glucose 1-dehydrogenase subfamily. The cofactor is Zn(2+).

It carries out the reaction D-glucose + NAD(+) = D-glucono-1,5-lactone + NADH + H(+). It catalyses the reaction D-glucose + NADP(+) = D-glucono-1,5-lactone + NADPH + H(+). In terms of biological role, catalyzes the NAD(P)(+)-dependent oxidation of D-glucose to D-gluconate via gluconolactone. Can utilize both NAD(+) and NADP(+) as electron acceptor. Is involved in the degradation of glucose through a non-phosphorylative variant of the Entner-Doudoroff pathway. The polypeptide is Glucose 1-dehydrogenase (Methanocella arvoryzae (strain DSM 22066 / NBRC 105507 / MRE50)).